The primary structure comprises 212 residues: uncharacterized protein (212 aa).

The next 4 helical transmembrane spans lie at 20-40 (FLIG…LIIC), 70-90 (LMLL…YWLG), 155-175 (FVLI…YLGE), and 192-212 (QIVI…MEKI).

Belongs to the DedA family.

It is found in the cell membrane. This is an uncharacterized protein from Haemophilus influenzae (strain ATCC 51907 / DSM 11121 / KW20 / Rd).